The following is a 185-amino-acid chain: Transcription termination/antitermination protein NusG (185 aa).

A KOW domain is found at 134–163 (VGQQVRIVEGPFATFSGEVEEVMSERNKVR).

This sequence belongs to the NusG family.

Its function is as follows. Participates in transcription elongation, termination and antitermination. This chain is Transcription termination/antitermination protein NusG, found in Treponema pallidum (strain Nichols).